An 82-amino-acid polypeptide reads, in one-letter code: Small ribosomal subunit protein bS16 (82 aa).

Belongs to the bacterial ribosomal protein bS16 family.

In Gloeothece citriformis (strain PCC 7424) (Cyanothece sp. (strain PCC 7424)), this protein is Small ribosomal subunit protein bS16.